Reading from the N-terminus, the 359-residue chain is MKLGCVLMAWALYLSLGVLWVAQMLLAASFETLQCEGPVCTEESSCHTEDDLTDAREAGFQVKAYTFSEPFHLIVSYDWLILQGPAKPVFEGDLLVLRCQAWQDWPLTQVTFYRDGSALGPPGPNREFSITVVQKADSGHYHCSGIFQSPGPGIPETASVVAITVQELFPAPILRAVPSAEPQAGSPMTLSCQTKLPLQRSAARLLFSFYKDGRIVQSRGLSSEFQIPTASEDHSGSYWCEAATEDNQVWKQSPQLEIRVQGASSSAAPPTLNPAPQKSAAPGTAPEEAPGPLPPPPTPSSEDPGFSSPLGMPDPHLYHQMGLLLKHMQDVRVLLGHLLMELRELSGHRKPGTTKATAE.

The first 27 residues, 1–27 (MKLGCVLMAWALYLSLGVLWVAQMLLA), serve as a signal peptide directing secretion. 2 consecutive Ig-like C2-type domains span residues 70 to 159 (PFHL…ETAS) and 170 to 257 (PAPI…PQLE). 2 cysteine pairs are disulfide-bonded: Cys-99–Cys-143 and Cys-192–Cys-240. The interval 259–313 (RVQGASSSAAPPTLNPAPQKSAAPGTAPEEAPGPLPPPPTPSSEDPGFSSPLGMP) is disordered. Over residues 279 to 288 (SAAPGTAPEE) the composition is skewed to low complexity. The segment covering 289–299 (APGPLPPPPTP) has biased composition (pro residues).

Monomer or homodimer; disulfide-linked. In terms of tissue distribution, expressed specifically in primary and secondary lymphoid tissues like lymph node, spleen and tonsil. Specifically expressed in B-cells with a high level in normal germinal center B-cells, centroblasts and in a subset of diffuse large B-cell lymphomas. Highly expressed in bone marrow B-cells and weakly in earlier B lineage cells. Expressed in pre-germinal and germinal center B-cells in secondary lymphoid tissues. Also expressed in melanoma and melanocytes.

The protein localises to the cytoplasm. In terms of biological role, may be implicated in B-cell differentiation and lymphomagenesis. The chain is Fc receptor-like A (FCRLA) from Homo sapiens (Human).